The primary structure comprises 303 residues: UDP-3-O-acyl-N-acetylglucosamine deacetylase (303 aa).

3 residues coordinate Zn(2+): histidine 78, histidine 237, and aspartate 241. Histidine 264 functions as the Proton donor in the catalytic mechanism.

Belongs to the LpxC family. It depends on Zn(2+) as a cofactor.

It carries out the reaction a UDP-3-O-[(3R)-3-hydroxyacyl]-N-acetyl-alpha-D-glucosamine + H2O = a UDP-3-O-[(3R)-3-hydroxyacyl]-alpha-D-glucosamine + acetate. It functions in the pathway glycolipid biosynthesis; lipid IV(A) biosynthesis; lipid IV(A) from (3R)-3-hydroxytetradecanoyl-[acyl-carrier-protein] and UDP-N-acetyl-alpha-D-glucosamine: step 2/6. Catalyzes the hydrolysis of UDP-3-O-myristoyl-N-acetylglucosamine to form UDP-3-O-myristoylglucosamine and acetate, the committed step in lipid A biosynthesis. The chain is UDP-3-O-acyl-N-acetylglucosamine deacetylase from Pseudomonas putida (strain ATCC 700007 / DSM 6899 / JCM 31910 / BCRC 17059 / LMG 24140 / F1).